We begin with the raw amino-acid sequence, 441 residues long: Phosphoglucosamine mutase (441 aa).

Residue S100 is the Phosphoserine intermediate of the active site. Mg(2+)-binding residues include S100, D239, D241, and D243. A Phosphoserine modification is found at S100.

The protein belongs to the phosphohexose mutase family. Mg(2+) is required as a cofactor. In terms of processing, activated by phosphorylation.

The enzyme catalyses alpha-D-glucosamine 1-phosphate = D-glucosamine 6-phosphate. Functionally, catalyzes the conversion of glucosamine-6-phosphate to glucosamine-1-phosphate. This chain is Phosphoglucosamine mutase, found in Ruthia magnifica subsp. Calyptogena magnifica.